The chain runs to 80 residues: Cell division activator CedA (80 aa).

This sequence belongs to the CedA family.

Activates the cell division inhibited by chromosomal DNA over-replication. The chain is Cell division activator CedA from Escherichia coli O1:K1 / APEC.